Reading from the N-terminus, the 54-residue chain is UPF0391 membrane protein Bpro_0879 (54 aa).

A run of 2 helical transmembrane segments spans residues 6–26 (VVFL…IAAG) and 30–50 (IAKI…VMGL).

The protein belongs to the UPF0391 family.

The protein resides in the cell membrane. The protein is UPF0391 membrane protein Bpro_0879 of Polaromonas sp. (strain JS666 / ATCC BAA-500).